Reading from the N-terminus, the 263-residue chain is Shikimate dehydrogenase (NADP(+)) (263 aa).

Residues 14-16 (SLS) and threonine 60 each bind shikimate. Lysine 64 functions as the Proton acceptor in the catalytic mechanism. Shikimate contacts are provided by asparagine 85 and aspartate 100. NADP(+)-binding positions include 123–127 (GAGGA), 146–151 (NRTPQR), and leucine 205. Tyrosine 207 lines the shikimate pocket. Glycine 228 is a binding site for NADP(+). Position 235 (glutamine 235) interacts with shikimate.

The protein belongs to the shikimate dehydrogenase family. Homodimer.

It catalyses the reaction shikimate + NADP(+) = 3-dehydroshikimate + NADPH + H(+). It functions in the pathway metabolic intermediate biosynthesis; chorismate biosynthesis; chorismate from D-erythrose 4-phosphate and phosphoenolpyruvate: step 4/7. Involved in the biosynthesis of the chorismate, which leads to the biosynthesis of aromatic amino acids. Catalyzes the reversible NADPH linked reduction of 3-dehydroshikimate (DHSA) to yield shikimate (SA). The sequence is that of Shikimate dehydrogenase (NADP(+)) from Thermus thermophilus (strain ATCC 27634 / DSM 579 / HB8).